A 444-amino-acid polypeptide reads, in one-letter code: MLPSAQVARLKPDPFPPSLSPIPHGAVTFAALAPCHNLPIFSSRQMLRDSLTYSHTSPTMSPQIANRFEASLDAQDIARISLFTLESGVILRDVPVAYKSWGRMNVSRDNCVIVCHTLTSSAHVTSWWPTLFGQGRAFDTSRYFIICLNYLGSPFGSAGPCSPDPDAEGQRPYGAKFPRTTIRDDVRIHRQVLDRLGVRQIAAVVGASMGGMHTLEWAFFGPEYVRKIVPIATSCRQSGWCAAWFETQRQCIYDDPKYLDGEYDVDDQPVRGLETARKIANLTYKSKPAMDERFHMAPGVQAGRNISSQDAKKEINGTDSGNSHRAGQPIEAVSSYLRYQAQKFAASFDANCYIAMTLKFDTHDISRGRAGSIPEALAMITQPALIICARSDGLYSFDEHVEMGRSIPNSRLCVVDTNEGHDFFVMEADKVNDAVRGFLDQSLM.

The propeptide occupies 1–71 (MLPSAQVARL…PQIANRFEAS (71 aa)). The region spanning 112-425 (VIVCHTLTSS…DTNEGHDFFV (314 aa)) is the AB hydrolase-1 domain. Residues Ser-208 and His-421 contribute to the active site.

This sequence belongs to the AB hydrolase superfamily. MetX family. As to quaternary structure, heterodimer of chain I and chain II.

It catalyses the reaction deacetylcephalosporin C + acetyl-CoA = cephalosporin C + CoA. It participates in antibiotic biosynthesis; cephalosporin C biosynthesis. Its function is as follows. Catalyzes the conversion of deacetylcephalosporin C to cephalosporin C. The sequence is that of Acetyl-CoA--deacetylcephalosporin C acetyltransferase (CEFG) from Hapsidospora chrysogena (Acremonium chrysogenum).